The chain runs to 188 residues: CMT1A duplicated region transcript 15 protein (188 aa).

As to expression, expressed in fetal heart, kidney, liver, lung and spleen.

The protein is CMT1A duplicated region transcript 15 protein (CDRT15) of Homo sapiens (Human).